The chain runs to 520 residues: Alpha-1B adrenergic receptor (520 aa).

Over 1-45 (MNPDLDTGHNTSAPAHWGELKNANFTGPNQTSSNSTLPQLDITRA) the chain is Extracellular. N-linked (GlcNAc...) asparagine glycosylation is found at asparagine 10, asparagine 24, asparagine 29, and asparagine 34. A helical transmembrane segment spans residues 46–70 (ISVGLVLGAFILFAIVGNILVILSV). Over 71 to 83 (ACNRHLRTPTNYF) the chain is Cytoplasmic. A helical transmembrane segment spans residues 84–105 (IVNLAMADLLLSFTVLPFSAAL). The Extracellular segment spans residues 106 to 115 (EVLGYWVLGR). Residues 116 to 141 (IFCDIWAAVDVLCCTASILSLCAISI) form a helical membrane-spanning segment. An intrachain disulfide couples cysteine 118 to cysteine 195. The Cytoplasmic segment spans residues 142–161 (DRYIGVRYSLQYPTLVTRRK). Residues 162–184 (AILALLSVWVLSTVISIGPLLGW) traverse the membrane as a helical segment. Residues 185–201 (KEPAPNDDKECGVTEEP) lie on the Extracellular side of the membrane. A helical membrane pass occupies residues 202–224 (FYALFSSLGSFYIPLAVILVMYC). The Cytoplasmic segment spans residues 225 to 295 (RVYIVAKRTT…FSREKKAAKT (71 aa)). The residue at position 264 (threonine 264) is a Phosphothreonine. Residues 296–319 (LGIVVGMFILCWLPFFIALPLGSL) form a helical membrane-spanning segment. Residues 320 to 326 (FSTLKPP) lie on the Extracellular side of the membrane. Residues 327–351 (DAVFKVVFWLGYFNSCLNPIIYPCS) form a helical membrane-spanning segment. Over 352–520 (SKEFKRAFVR…SNMPLAPGQF (169 aa)) the chain is Cytoplasmic. Residue cysteine 365 is the site of S-palmitoyl cysteine attachment. The short motif at 368 to 380 (RGRGRRRRRRRRR) is the Nuclear localization signal element. 2 disordered regions span residues 394 to 432 (GGSL…GYLG) and 479 to 520 (LTEP…PGQF).

This sequence belongs to the G-protein coupled receptor 1 family. Adrenergic receptor subfamily. ADRA1B sub-subfamily. In terms of assembly, homo- and heterooligomer. Heterooligomerizes with ADRA1B homooligomers in cardiac myocytes. Interacts with CAVIN4.

It is found in the nucleus membrane. The protein resides in the cell membrane. It localises to the cytoplasm. The protein localises to the membrane. Its subcellular location is the caveola. Functionally, this alpha-adrenergic receptor mediates its action by association with G proteins that activate a phosphatidylinositol-calcium second messenger system. Its effect is mediated by G(q) and G(11) proteins. Nuclear ADRA1A-ADRA1B heterooligomers regulate phenylephrine (PE)-stimulated ERK signaling in cardiac myocytes. This Homo sapiens (Human) protein is Alpha-1B adrenergic receptor (ADRA1B).